A 127-amino-acid chain; its full sequence is Adult-specific rigid cuticular protein 12.6 (127 aa).

Residues 9-87 form the Chitin-binding type R&amp;R domain; that stretch reads GPAYNFGYNT…ALAALAPKAP (79 aa).

In terms of biological role, component of the rigid cuticle of the spider. The sequence is that of Adult-specific rigid cuticular protein 12.6 from Araneus diadematus (European garden spider).